The chain runs to 228 residues: LOB domain-containing protein 30 (228 aa).

Residues 16 to 118 (GPCGACKFLR…TELSYLQAHL (103 aa)) form the LOB domain. Positions 188 to 228 (SNMGGGGELQALAREFIHGGQMPAQPSPGTSGSASSVIKRE) are disordered. A compositionally biased stretch (polar residues) spans 214 to 228 (SPGTSGSASSVIKRE).

Belongs to the LOB domain-containing protein family. As to expression, expressed in roots, stems, leaves and flowers. Expressed in vascular tissues of hypocotyls, leaves, roots, developing floral organs and siliques.

Involved in the positive regulation of tracheary element (TE) differentiation. Involved in a positive feedback loop that maintains or promotes NAC030/VND7 expression that regulates TE differentiation-related genes. This is LOB domain-containing protein 30 (LBD30) from Arabidopsis thaliana (Mouse-ear cress).